A 131-amino-acid chain; its full sequence is Profilin-4 (131 aa).

A disulfide bridge connects residues C13 and C115. An Involved in PIP2 interaction motif is present at residues 81-97 (AVIRGKKGAGGITVKKT). Position 111 is a phosphothreonine (T111).

This sequence belongs to the profilin family. Occurs in many kinds of cells as a complex with monomeric actin in a 1:1 ratio. In terms of processing, phosphorylated by MAP kinases.

It localises to the cytoplasm. It is found in the cytoskeleton. Binds to actin and affects the structure of the cytoskeleton. At high concentrations, profilin prevents the polymerization of actin, whereas it enhances it at low concentrations. The sequence is that of Profilin-4 from Olea europaea (Common olive).